The sequence spans 115 residues: DNA-directed RNA polymerase subunit omega (115 aa).

Belongs to the RNA polymerase subunit omega family. The RNAP catalytic core consists of 2 alpha, 1 beta, 1 beta' and 1 omega subunit. When a sigma factor is associated with the core the holoenzyme is formed, which can initiate transcription.

It carries out the reaction RNA(n) + a ribonucleoside 5'-triphosphate = RNA(n+1) + diphosphate. Promotes RNA polymerase assembly. Latches the N- and C-terminal regions of the beta' subunit thereby facilitating its interaction with the beta and alpha subunits. The polypeptide is DNA-directed RNA polymerase subunit omega (Cutibacterium acnes (strain DSM 16379 / KPA171202) (Propionibacterium acnes)).